Reading from the N-terminus, the 119-residue chain is NLYQFKNMIQCTVPSRSWWDFADYGCYCGKGGSGTPVDDLDRCCQVHDNCYNEAEKISGCWPYFKTYSYECSQGTLTCKGGNNACAAAVCDCDRLAAICFAGAPYTDANYNIDLKARCQ.

Intrachain disulfides connect cysteine 11-cysteine 71, cysteine 26-cysteine 118, cysteine 28-cysteine 44, cysteine 43-cysteine 99, cysteine 50-cysteine 92, cysteine 60-cysteine 85, and cysteine 78-cysteine 90. Residues tyrosine 27, glycine 29, and glycine 31 each contribute to the Ca(2+) site. Histidine 47 is a catalytic residue. Residue aspartate 48 coordinates Ca(2+). The active site involves aspartate 93.

The protein belongs to the phospholipase A2 family. Group I subfamily. D49 sub-subfamily. Requires Ca(2+) as cofactor. As to expression, expressed by the venom gland.

Its subcellular location is the secreted. The enzyme catalyses a 1,2-diacyl-sn-glycero-3-phosphocholine + H2O = a 1-acyl-sn-glycero-3-phosphocholine + a fatty acid + H(+). Its function is as follows. Snake venom phospholipase A2 (PLA2) that has an effectively inhibitory effect on A-type K(+) currents (Kv/KCN) in acutely dissociated rat dorsal root ganglion (DRG) neurons. This inhibitory effect is independent of its enzymatic activity. PLA2 catalyzes the calcium-dependent hydrolysis of the 2-acyl groups in 3-sn-phosphoglycerides. The protein is Acidic phospholipase A2 natratoxin of Naja atra (Chinese cobra).